The sequence spans 219 residues: uncharacterized protein (219 aa).

At Ser-23 the chain carries Phosphoserine. Lys-137 participates in a covalent cross-link: Glycyl lysine isopeptide (Lys-Gly) (interchain with G-Cter in SUMO).

The protein resides in the cytoplasm. This is an uncharacterized protein from Saccharomyces cerevisiae (strain ATCC 204508 / S288c) (Baker's yeast).